An 82-amino-acid chain; its full sequence is RNA-binding protein Hfq (82 aa).

One can recognise a Sm domain in the interval D11–I71.

Belongs to the Hfq family. As to quaternary structure, homohexamer.

Its function is as follows. RNA chaperone that binds small regulatory RNA (sRNAs) and mRNAs to facilitate mRNA translational regulation in response to envelope stress, environmental stress and changes in metabolite concentrations. Also binds with high specificity to tRNAs. This is RNA-binding protein Hfq from Rhodopseudomonas palustris (strain HaA2).